An 856-amino-acid polypeptide reads, in one-letter code: MSLSEEQVRSFLDGNPTFAHQYFGKKLSPENVAGACEDGWLADCGSLRELCQVEESAALFELVQDMQESVNMERVVFKILRRLCTILHADRCSLFMYRQRNGIAELATRLFSVQPDSLLEDCLVPPDSEIVFPLDIGIVGHVAQTKKMINVQDVAECPHFSSFADELTDYVTKNILSTPIMNGKDVVAVIMAVNKLDGPCFTSEDEDVFTKYLNFATLNLKIYHLSYLHNCETRRGQVLLWSANKVFEELTDIERQFHKAFYTVRAYLNCERYSVGLLDMTKEKEFFDVWPVLMGEAQPYSGPRTPDGREIVFYKVIDYILHGKEDIKVIPTPPADHWALASGLPTYVAESGFICNIMNASADEMFNFQEGPLDDSGWVIKNVLSMPIVNKKEEIVGVATFYNRKDGKPFDDQDEVLMESLTQFLGWSVLNTDTYDKMNKLENRKDIAQDMVLYHVRCDKDEIQEILPTRDRLGKEPADCEEDELGKILKEELPGPTKFDIYEFHFSDLECTELELVKCGIQMYYELGVVRKFQIPQEVLVRFLFSVSKAYRRITYHNWRHGFNVAQTMFTLLMTGKLKSYYTDLEAFAMVTAGLCHDIDHRGTNNLYQMKSQNPLAKLHGSSILERHHLEFGKFLLAEESLNIYQNLNRRQHEHVIHLMDIAIIATDLALYFKKRTMFQKIVDESKNYEDKKSWVEYLSLETTRKEIVMAMMMTACDLSAITKPWEVQSKVALLVAAEFWEQGDLERTVLDQQPIPMMDRNKAAELPKLQVGFIDFVCTFVYKEFSRFHEEILPMFDRLQNNRKEWKALADEYEAKVKALEEEKKKEEDRVAAKKVGTEVCNGGPAPKSSTCCIL.

Residue Ser2 is modified to N-acetylserine. GAF domains follow at residues 71–220 (NMER…TLNL) and 252–429 (DIER…GWSV). Positions 481 to 814 (EEDELGKILK…KEWKALADEY (334 aa)) constitute a PDEase domain. His557 (proton donor) is an active-site residue. Positions 561, 597, 598, and 718 each coordinate a divalent metal cation. Cys853 carries the S-geranylgeranyl cysteine lipid modification. Positions 854-856 (CIL) are cleaved as a propeptide — removed in mature form.

The protein belongs to the cyclic nucleotide phosphodiesterase family. In terms of assembly, oligomer composed of two catalytic chains (alpha and beta), an inhibitory chain (gamma) and the delta chain. Requires a divalent metal cation as cofactor.

The protein resides in the membrane. It localises to the cell projection. The protein localises to the cilium. Its subcellular location is the photoreceptor outer segment. It catalyses the reaction 3',5'-cyclic GMP + H2O = GMP + H(+). Its function is as follows. Rod-specific cGMP phosphodiesterase that catalyzes the hydrolysis of 3',5'-cyclic GMP. Necessary for the formation of a functional phosphodiesterase holoenzyme. Involved in retinal circadian rhythm photoentrainment via modulation of UVA and orange light-induced phase-shift of the retina clock. May participate in processes of transmission and amplification of the visual signal. This chain is Rod cGMP-specific 3',5'-cyclic phosphodiesterase subunit beta, found in Mus musculus (Mouse).